We begin with the raw amino-acid sequence, 162 residues long: Large ribosomal subunit protein uL10 (162 aa).

It belongs to the universal ribosomal protein uL10 family. In terms of assembly, part of the ribosomal stalk of the 50S ribosomal subunit. The N-terminus interacts with L11 and the large rRNA to form the base of the stalk. The C-terminus forms an elongated spine to which L12 dimers bind in a sequential fashion forming a multimeric L10(L12)X complex.

Functionally, forms part of the ribosomal stalk, playing a central role in the interaction of the ribosome with GTP-bound translation factors. In Aliarcobacter butzleri (strain RM4018) (Arcobacter butzleri), this protein is Large ribosomal subunit protein uL10.